The sequence spans 134 residues: UPF0412 protein YaaI (134 aa).

An N-terminal signal peptide occupies residues 1-23 (MKSVITISASLAISLMLCCTAQA).

This sequence belongs to the UPF0412 family.

This is UPF0412 protein YaaI from Escherichia coli O127:H6 (strain E2348/69 / EPEC).